A 277-amino-acid chain; its full sequence is Proteasome subunit beta type-7 (277 aa).

Positions 1–43 (MAAVSVYERPVGGFSFDNCRRNAVLEADFAKKGYKLPTARKTG) are cleaved as a propeptide — removed in mature form. Catalysis depends on threonine 44, which acts as the Nucleophile.

Belongs to the peptidase T1B family. The 26S proteasome consists of a 20S proteasome core and two 19S regulatory subunits. The 20S proteasome core is a barrel-shaped complex made of 28 subunits that are arranged in four stacked rings. The two outer rings are each formed by seven alpha subunits, and the two inner rings are formed by seven beta subunits. The proteolytic activity is exerted by three beta-subunits PSMB5, PSMB6 and PSMB7.

The protein resides in the cytoplasm. It is found in the nucleus. The catalysed reaction is Cleavage of peptide bonds with very broad specificity.. Component of the 20S core proteasome complex involved in the proteolytic degradation of most intracellular proteins. This complex plays numerous essential roles within the cell by associating with different regulatory particles. Associated with two 19S regulatory particles, forms the 26S proteasome and thus participates in the ATP-dependent degradation of ubiquitinated proteins. The 26S proteasome plays a key role in the maintenance of protein homeostasis by removing misfolded or damaged proteins that could impair cellular functions, and by removing proteins whose functions are no longer required. Associated with the PA200 or PA28, the 20S proteasome mediates ubiquitin-independent protein degradation. This type of proteolysis is required in several pathways including spermatogenesis (20S-PA200 complex) or generation of a subset of MHC class I-presented antigenic peptides (20S-PA28 complex). Within the 20S core complex, PSMB7 displays a trypsin-like activity. This is Proteasome subunit beta type-7 (PSMB7) from Bos taurus (Bovine).